The sequence spans 257 residues: NAD kinase (257 aa).

The active-site Proton acceptor is Asp-46. Residues Asp-46–Gly-47, Asn-116–Glu-117, Asp-146, Ala-154, and Thr-157–Ser-162 contribute to the NAD(+) site.

This sequence belongs to the NAD kinase family. A divalent metal cation serves as cofactor.

It localises to the cytoplasm. It carries out the reaction NAD(+) + ATP = ADP + NADP(+) + H(+). In terms of biological role, involved in the regulation of the intracellular balance of NAD and NADP, and is a key enzyme in the biosynthesis of NADP. Catalyzes specifically the phosphorylation on 2'-hydroxyl of the adenosine moiety of NAD to yield NADP. The sequence is that of NAD kinase from Mesorhizobium japonicum (strain LMG 29417 / CECT 9101 / MAFF 303099) (Mesorhizobium loti (strain MAFF 303099)).